The primary structure comprises 461 residues: Cysteine--tRNA ligase (461 aa).

A Zn(2+)-binding site is contributed by Cys-30. Positions 32–42 (VTIYDLCHIGH) match the 'HIGH' region motif. Zn(2+) is bound by residues Cys-211, His-236, and Glu-240. The 'KMSKS' region signature appears at 268 to 272 (KMSKS). An ATP-binding site is contributed by Lys-271.

This sequence belongs to the class-I aminoacyl-tRNA synthetase family. Monomer. It depends on Zn(2+) as a cofactor.

The protein localises to the cytoplasm. The catalysed reaction is tRNA(Cys) + L-cysteine + ATP = L-cysteinyl-tRNA(Cys) + AMP + diphosphate. This chain is Cysteine--tRNA ligase, found in Shewanella sp. (strain W3-18-1).